Here is a 198-residue protein sequence, read N- to C-terminus: SCO2-like protein RF_0043 (198 aa).

This sequence belongs to the SCO1/2 family.

This is SCO2-like protein RF_0043 from Rickettsia felis (strain ATCC VR-1525 / URRWXCal2) (Rickettsia azadi).